Consider the following 288-residue polypeptide: Glucose-1-phosphate thymidylyltransferase (288 aa).

Residues D108 and D223 each coordinate Mg(2+).

The protein belongs to the glucose-1-phosphate thymidylyltransferase family. As to quaternary structure, homotetramer. The cofactor is Mg(2+).

It catalyses the reaction dTTP + alpha-D-glucose 1-phosphate + H(+) = dTDP-alpha-D-glucose + diphosphate. Functionally, catalyzes the formation of dTDP-glucose, from dTTP and glucose 1-phosphate, as well as its pyrophosphorolysis. This Neisseria meningitidis serogroup A / serotype 4A (strain DSM 15465 / Z2491) protein is Glucose-1-phosphate thymidylyltransferase (rmlA1).